We begin with the raw amino-acid sequence, 462 residues long: DEK domain-containing chromatin-associated protein 1 (462 aa).

Disordered stretches follow at residues 18 to 91 (AVTE…TQGR) and 212 to 390 (KETK…RKEL). A compositionally biased stretch (basic and acidic residues) spans 20–32 (TEKDTETKKKDEV). Positions 33-46 (EKDEAMEEKGEEID) are enriched in acidic residues. Positions 77–91 (PRSSGNKPLSITQGR) are enriched in polar residues. A compositionally biased stretch (acidic residues) spans 267–276 (NGEDDVAPEE). 3 stretches are compositionally biased toward basic and acidic residues: residues 277-303 (ENNK…TDKK), 312-322 (EKPAAEEEKSI), and 347-360 (QKVD…EKGK). The Nuclear localization signal motif lies at 344 to 351 (SKKQKVDK). The DEK-C domain occupies 384–439 (EPTRKELHVVVTKILKEVDFNTATLSDILRKLGSHFGIDLMHRKAEVKDIITDAIN). DNA-binding regions lie at residues 402–416 (DFNT…RKLG) and 431–435 (KDIIT). The disordered stretch occupies residues 438–462 (INEMSDDDDEKEEDTEDEGEKEGKD). Residues 441 to 462 (MSDDDDEKEEDTEDEGEKEGKD) show a composition bias toward acidic residues.

In terms of assembly, found in a mRNA splicing-dependent exon junction complex (EJC). Binds specifically histones H3 and H4.

It localises to the nucleus. The protein localises to the nucleolus. Its function is as follows. Chromatin-associated protein which contributes to the modulation of chromatin structure (such as super-helical structure of DNA) and function. Binds to chromatin of protein-coding genes throughout the genome to regulate nucleosome occupancy and chromatin accessibility, and to modulate the expression of target genes. This Arabidopsis thaliana (Mouse-ear cress) protein is DEK domain-containing chromatin-associated protein 1.